A 427-amino-acid chain; its full sequence is Proline--tRNA ligase (427 aa).

The protein belongs to the class-II aminoacyl-tRNA synthetase family. ProS type 2 subfamily. Homodimer.

The protein resides in the cytoplasm. It catalyses the reaction tRNA(Pro) + L-proline + ATP = L-prolyl-tRNA(Pro) + AMP + diphosphate. Functionally, catalyzes the attachment of proline to tRNA(Pro) in a two-step reaction: proline is first activated by ATP to form Pro-AMP and then transferred to the acceptor end of tRNA(Pro). This is Proline--tRNA ligase from Rickettsia akari (strain Hartford).